Consider the following 218-residue polypeptide: Recombination protein RecR (218 aa).

The C4-type zinc-finger motif lies at 56–71 (CRICCNISREEVCRIC). The region spanning 79 to 195 (GTICVVEEPK…VVSRLASGMP (117 aa)) is the Toprim domain.

Belongs to the RecR family.

Functionally, may play a role in DNA repair. It seems to be involved in an RecBC-independent recombinational process of DNA repair. It may act with RecF and RecO. The chain is Recombination protein RecR from Corynebacterium glutamicum (strain R).